The primary structure comprises 130 residues: Small ribosomal subunit protein uS9 (130 aa).

The protein belongs to the universal ribosomal protein uS9 family.

The protein is Small ribosomal subunit protein uS9 of Enterococcus faecalis (strain ATCC 700802 / V583).